A 497-amino-acid polypeptide reads, in one-letter code: COP9 signalosome complex subunit 3 (497 aa).

The 176-residue stretch at 233 to 408 (QAFDAFERCV…DGSPAYLTFL (176 aa)) folds into the PCI domain.

The protein belongs to the CSN3 family. As to quaternary structure, component of the COP9 signalosome (CSN) complex.

It localises to the cytoplasm. The protein localises to the nucleus. Functionally, component of the COP9 signalosome (CSN) complex that acts as an regulator of the ubiquitin (Ubl) conjugation pathway by mediating the deneddylation of the cullin subunit of SCF-type E3 ubiquitin-protein ligase complexes. The CSN complex is involved in the regulation of the circadian clock through its control of the stability of the SCF(FWD1) complex. This Neurospora crassa (strain ATCC 24698 / 74-OR23-1A / CBS 708.71 / DSM 1257 / FGSC 987) protein is COP9 signalosome complex subunit 3 (csn-3).